Reading from the N-terminus, the 269-residue chain is Mitochondrial genome maintenance protein MGM101 (269 aa).

The N-terminal 30 residues, 1 to 30, are a transit peptide targeting the mitochondrion; sequence MKSIFKVRGCVSHAAQFCQKRTVVSTGTSN.

It belongs to the MGM101 family.

Its subcellular location is the mitochondrion matrix. The protein resides in the mitochondrion nucleoid. In terms of biological role, performs an essential function in the repair of oxidatively damaged mtDNA that is required for the maintenance of the mitochondrial genome. Binds to DNA. In Saccharomyces cerevisiae (strain ATCC 204508 / S288c) (Baker's yeast), this protein is Mitochondrial genome maintenance protein MGM101 (MGM101).